A 331-amino-acid polypeptide reads, in one-letter code: Ubiquinone biosynthesis protein UbiU (331 aa).

C169, C176, C193, and C232 together coordinate [4Fe-4S] cluster.

Belongs to the peptidase U32 family. UbiU subfamily. As to quaternary structure, forms a heterodimer with UbiV. Requires [4Fe-4S] cluster as cofactor.

Its pathway is cofactor biosynthesis; ubiquinone biosynthesis. Functionally, required for O(2)-independent ubiquinone (coenzyme Q) biosynthesis. Together with UbiV, is essential for the C6-hydroxylation reaction in the oxygen-independent ubiquinone biosynthesis pathway. The polypeptide is Ubiquinone biosynthesis protein UbiU (Escherichia coli (strain K12)).